We begin with the raw amino-acid sequence, 68 residues long: Antimicrobial peptide UyCT3 (68 aa).

Positions 1–23 are cleaved as a signal peptide; the sequence is MKNQFVLLLLAIVFLQMIFQSDA. Phe-36 carries the phenylalanine amide modification. Positions 40-68 are excised as a propeptide; it reads GLENMDKFDELFDGDLSEADLDFLKELMR.

It belongs to the non-disulfide-bridged peptide (NDBP) superfamily. Short antimicrobial peptide (group 4) family. In terms of processing, the non-amidated UyCT3 does not show antimicrobial activity. In terms of tissue distribution, expressed by the venom gland.

It is found in the secreted. The protein localises to the target cell membrane. Antimicrobial peptide that inhibits the growth of Gram-positive (S.aureus, MIC=10 uM) and Gram-negative bacteria (E.coli, MIC=15 uM and P.aeruginosa, MIC=6 uM). It also shows 35% of hemolysis when 15 uM are tested (95% at 50 uM). The polypeptide is Antimicrobial peptide UyCT3 (Urodacus yaschenkoi (Inland robust scorpion)).